The chain runs to 190 residues: Elongation factor P-like protein (190 aa).

This sequence belongs to the elongation factor P family.

In Photorhabdus laumondii subsp. laumondii (strain DSM 15139 / CIP 105565 / TT01) (Photorhabdus luminescens subsp. laumondii), this protein is Elongation factor P-like protein.